A 421-amino-acid polypeptide reads, in one-letter code: MEKFRVIGSDKPLVGEVTISGAKNAALPILFASILAEEPVEVANVPHLRDIDTTMELLKRLGAKVSRNGSVHVDPSSINEYCAPYDLVKTMRASIWALGPLVARFGQGQVSLPGGCAIGARPVDLHITGLEQLGATITLEDGYVKAEVDGRLKGAHIVMDKVSVGATITIMCAAALAEGTTTLDNAAREPEIVDTADFLNTLGAKISGAGTDTITIEGVERLGGGKHNVVADRIETGTFLVAAAVSGGKVVCRNTNAHLLEAVLAKLEEAGALVETGEDWISVDMTDRELKAVSIRTAPHPGFPTDMQAQFTLLNMMAKGGGVITETIFENRFMHVPELMRMGAKAEIEGNTVICGDVDSLSGAQVMATDLRASASLVIAGCIAKGETIVDRIYHIDRGYDKIENKLSALGANIERVSEAG.

Position 23 to 24 (23 to 24 (KN)) interacts with phosphoenolpyruvate. Arg92 contacts UDP-N-acetyl-alpha-D-glucosamine. Cys116 serves as the catalytic Proton donor. Cys116 carries the 2-(S-cysteinyl)pyruvic acid O-phosphothioketal modification. UDP-N-acetyl-alpha-D-glucosamine-binding positions include 121–125 (RPVDL), 161–164 (KVSV), Asp306, and Ile328.

The protein belongs to the EPSP synthase family. MurA subfamily.

It localises to the cytoplasm. It catalyses the reaction phosphoenolpyruvate + UDP-N-acetyl-alpha-D-glucosamine = UDP-N-acetyl-3-O-(1-carboxyvinyl)-alpha-D-glucosamine + phosphate. The protein operates within cell wall biogenesis; peptidoglycan biosynthesis. Functionally, cell wall formation. Adds enolpyruvyl to UDP-N-acetylglucosamine. The chain is UDP-N-acetylglucosamine 1-carboxyvinyltransferase from Vibrio campbellii (strain ATCC BAA-1116).